A 176-amino-acid polypeptide reads, in one-letter code: ATP synthase subunit b (176 aa).

The chain crosses the membrane as a helical span at residues 14–34; that stretch reads STTLGTMIVVSGAFLILMLLL.

Belongs to the ATPase B chain family. F-type ATPases have 2 components, F(1) - the catalytic core - and F(0) - the membrane proton channel. F(1) has five subunits: alpha(3), beta(3), gamma(1), delta(1), epsilon(1). F(0) has three main subunits: a(1), b(2) and c(10-14). The alpha and beta chains form an alternating ring which encloses part of the gamma chain. F(1) is attached to F(0) by a central stalk formed by the gamma and epsilon chains, while a peripheral stalk is formed by the delta and b chains.

The protein localises to the cell membrane. Its function is as follows. F(1)F(0) ATP synthase produces ATP from ADP in the presence of a proton or sodium gradient. F-type ATPases consist of two structural domains, F(1) containing the extramembraneous catalytic core and F(0) containing the membrane proton channel, linked together by a central stalk and a peripheral stalk. During catalysis, ATP synthesis in the catalytic domain of F(1) is coupled via a rotary mechanism of the central stalk subunits to proton translocation. Component of the F(0) channel, it forms part of the peripheral stalk, linking F(1) to F(0). The sequence is that of ATP synthase subunit b from Enterococcus faecalis (strain ATCC 700802 / V583).